A 444-amino-acid polypeptide reads, in one-letter code: Chromosome partition protein MukF (444 aa).

Residues 212-240 are leucine-zipper; the sequence is LDETSGNLRELQDTLNAAGDKLQAQLLRI.

It belongs to the MukF family. In terms of assembly, interacts, and probably forms a ternary complex, with MukE and MukB via its C-terminal region. The complex formation is stimulated by calcium or magnesium. It is required for an interaction between MukE and MukB.

It localises to the cytoplasm. Its subcellular location is the nucleoid. In terms of biological role, involved in chromosome condensation, segregation and cell cycle progression. May participate in facilitating chromosome segregation by condensation DNA from both sides of a centrally located replisome during cell division. Not required for mini-F plasmid partitioning. Probably acts via its interaction with MukB and MukE. Overexpression results in anucleate cells. It has a calcium binding activity. The sequence is that of Chromosome partition protein MukF from Haemophilus influenzae (strain PittGG).